Reading from the N-terminus, the 323-residue chain is tRNA U34 carboxymethyltransferase (323 aa).

Residues K91, W105, K110, G130, 152–154, 181–182, M196, Y200, and R315 each bind carboxy-S-adenosyl-L-methionine; these read DPS and IE.

It belongs to the class I-like SAM-binding methyltransferase superfamily. CmoB family. In terms of assembly, homotetramer.

The enzyme catalyses carboxy-S-adenosyl-L-methionine + 5-hydroxyuridine(34) in tRNA = 5-carboxymethoxyuridine(34) in tRNA + S-adenosyl-L-homocysteine + H(+). Functionally, catalyzes carboxymethyl transfer from carboxy-S-adenosyl-L-methionine (Cx-SAM) to 5-hydroxyuridine (ho5U) to form 5-carboxymethoxyuridine (cmo5U) at position 34 in tRNAs. This chain is tRNA U34 carboxymethyltransferase, found in Vibrio atlanticus (strain LGP32) (Vibrio splendidus (strain Mel32)).